We begin with the raw amino-acid sequence, 518 residues long: Putative BTB/POZ domain and WD-repeat protein R731 (518 aa).

Positions threonine 22–asparagine 92 constitute a BTB domain. The interval asparagine 224–aspartate 246 is disordered. A compositionally biased stretch (acidic residues) spans serine 228–aspartate 246. WD repeat units lie at residues asparagine 391–lysine 430 and phenylalanine 437–asparagine 475.

Belongs to the mimivirus BTB/WD family.

This is Putative BTB/POZ domain and WD-repeat protein R731 from Acanthamoeba polyphaga (Amoeba).